The sequence spans 260 residues: Myb transcription factor 42 (260 aa).

2 consecutive HTH myb-type domains span residues lysine 9–leucine 61 and arginine 62–leucine 116. 2 DNA-binding regions (H-T-H motif) span residues tryptophan 37 to leucine 61 and tryptophan 89 to isoleucine 112.

In terms of tissue distribution, mainly expressed in the aerial parts and, to a lower extent, in roots.

It is found in the nucleus. Its function is as follows. Transcription factor that negatively regulates the expression of caffeic acid O-methyl-transferase genes (COMTs) and of other genes involved in the biosynthesis of lignin, thus preventing lignification. The protein is Myb transcription factor 42 of Zea mays (Maize).